The sequence spans 64 residues: UPF0434 protein Bcep18194_A5877 (64 aa).

The protein belongs to the UPF0434 family.

The protein is UPF0434 protein Bcep18194_A5877 of Burkholderia lata (strain ATCC 17760 / DSM 23089 / LMG 22485 / NCIMB 9086 / R18194 / 383).